We begin with the raw amino-acid sequence, 78 residues long: RNA-binding protein Hfq (78 aa).

One can recognise a Sm domain in the interval 10–69; sequence DPFLNTLRKEHVPVSIYLVNGIKLQGQIESFDQYVVLLRNTVTQMVYKHAISTVVPARAV.

It belongs to the Hfq family. Homohexamer.

RNA chaperone that binds small regulatory RNA (sRNAs) and mRNAs to facilitate mRNA translational regulation in response to envelope stress, environmental stress and changes in metabolite concentrations. Also binds with high specificity to tRNAs. The polypeptide is RNA-binding protein Hfq (Bordetella bronchiseptica (strain ATCC BAA-588 / NCTC 13252 / RB50) (Alcaligenes bronchisepticus)).